Reading from the N-terminus, the 109-residue chain is Probable cytochrome b-c1 complex subunit 7 (109 aa).

This sequence belongs to the UQCRB/QCR7 family. Component of the ubiquinol-cytochrome c oxidoreductase (cytochrome b-c1 complex, complex III, CIII), a multisubunit enzyme composed of 3 respiratory subunits cytochrome b, cytochrome c1 and Rieske protein, 2 core protein subunits, and additional low-molecular weight protein subunits. The complex exists as an obligatory dimer and forms supercomplexes (SCs) in the inner mitochondrial membrane with cytochrome c oxidase (complex IV, CIV).

The protein resides in the mitochondrion inner membrane. In terms of biological role, component of the ubiquinol-cytochrome c oxidoreductase, a multisubunit transmembrane complex that is part of the mitochondrial electron transport chain which drives oxidative phosphorylation. The respiratory chain contains 3 multisubunit complexes succinate dehydrogenase (complex II, CII), ubiquinol-cytochrome c oxidoreductase (cytochrome b-c1 complex, complex III, CIII) and cytochrome c oxidase (complex IV, CIV), that cooperate to transfer electrons derived from NADH and succinate to molecular oxygen, creating an electrochemical gradient over the inner membrane that drives transmembrane transport and the ATP synthase. The cytochrome b-c1 complex catalyzes electron transfer from ubiquinol to cytochrome c, linking this redox reaction to translocation of protons across the mitochondrial inner membrane, with protons being carried across the membrane as hydrogens on the quinol. In the process called Q cycle, 2 protons are consumed from the matrix, 4 protons are released into the intermembrane space and 2 electrons are passed to cytochrome c. The protein is Probable cytochrome b-c1 complex subunit 7 of Dictyostelium discoideum (Social amoeba).